The following is a 199-amino-acid chain: dITP/XTP pyrophosphatase (199 aa).

12–17 (SGNAGK) serves as a coordination point for substrate. Catalysis depends on Asp-73, which acts as the Proton acceptor. Residue Asp-73 participates in Mg(2+) binding. Residues Ser-74, 157–160 (FGYD), Lys-180, and 185–186 (HR) contribute to the substrate site.

The protein belongs to the HAM1 NTPase family. Homodimer. It depends on Mg(2+) as a cofactor.

The enzyme catalyses XTP + H2O = XMP + diphosphate + H(+). The catalysed reaction is dITP + H2O = dIMP + diphosphate + H(+). It carries out the reaction ITP + H2O = IMP + diphosphate + H(+). In terms of biological role, pyrophosphatase that catalyzes the hydrolysis of nucleoside triphosphates to their monophosphate derivatives, with a high preference for the non-canonical purine nucleotides XTP (xanthosine triphosphate), dITP (deoxyinosine triphosphate) and ITP. Seems to function as a house-cleaning enzyme that removes non-canonical purine nucleotides from the nucleotide pool, thus preventing their incorporation into DNA/RNA and avoiding chromosomal lesions. The polypeptide is dITP/XTP pyrophosphatase (Neisseria meningitidis serogroup A / serotype 4A (strain DSM 15465 / Z2491)).